The chain runs to 380 residues: Cytochrome b (380 aa).

4 helical membrane-spanning segments follow: residues 34 to 54 (FGSLLGLCLITQILTGLFLAM), 78 to 99 (WLLRNVHANGASLFFICMYCHI), 114 to 134 (WNVGVILFLVTVLTAFVGYVL), and 179 to 199 (FFAFHFLFPFIIAALAIIDLV). 2 residues coordinate heme b: His84 and His98. His183 serves as a coordination point for heme b. Residue His202 participates in a ubiquinone binding. 4 helical membrane-spanning segments follow: residues 227–247 (TKDTVGFIALIAALFVLALLF), 289–309 (LGGVIALVAAILVLFLMPLLN), 321–341 (LSQATFWILVATFFVLTWIGS), and 348–369 (FVLIGQIASLLYFSLFIFGFPL).

The protein belongs to the cytochrome b family. The main subunits of complex b-c1 are: cytochrome b, cytochrome c1 and the Rieske protein. The cofactor is heme b.

Its subcellular location is the mitochondrion inner membrane. Functionally, component of the ubiquinol-cytochrome c reductase complex (complex III or cytochrome b-c1 complex) that is part of the mitochondrial respiratory chain. The b-c1 complex mediates electron transfer from ubiquinol to cytochrome c. Contributes to the generation of a proton gradient across the mitochondrial membrane that is then used for ATP synthesis. The polypeptide is Cytochrome b (MT-CYB) (Paracentrotus lividus (Common sea urchin)).